The chain runs to 103 residues: Small ribosomal subunit protein uS10 (103 aa).

Belongs to the universal ribosomal protein uS10 family. As to quaternary structure, part of the 30S ribosomal subunit.

Its function is as follows. Involved in the binding of tRNA to the ribosomes. In Methylibium petroleiphilum (strain ATCC BAA-1232 / LMG 22953 / PM1), this protein is Small ribosomal subunit protein uS10.